We begin with the raw amino-acid sequence, 293 residues long: Xylanase inhibitor protein XIP (293 aa).

The N-terminal stretch at 1–21 (MALRRLAALLSLAVLLSAGLA) is a signal peptide. One can recognise a GH18 domain in the interval 31–293 (GDTVIIWGRN…DKKTGFTAHL (263 aa)). Cystine bridges form between cysteine 50/cysteine 92 and cysteine 189/cysteine 218.

Belongs to the glycosyl hydrolase 18 family. Xylanase inhibitor subfamily. As to expression, expressed in mature grain.

It localises to the secreted. Functionally, fungal xylanase inhibitor. Possesses competitive inhibiting activity against several fungal endo-1,4-beta-D-xylanases belonging to glycoside hydrolase family 10 (GH10) and family 11 (GH11). May function in plant defense against secreted fungal pathogen xylanases. Is similar to class III chitinases, but does not exhibit chitinase activity. This is Xylanase inhibitor protein XIP from Oryza sativa subsp. japonica (Rice).